A 307-amino-acid chain; its full sequence is GTPase Era (307 aa).

The 170-residue stretch at 17–186 folds into the Era-type G domain; it reads RCGFVAIVGR…LELIKPYLPE (170 aa). The G1 stretch occupies residues 25 to 32; the sequence is GRPNVGKS. 25-32 lines the GTP pocket; that stretch reads GRPNVGKS. The interval 51 to 55 is G2; it reads QTTRN. The interval 72–75 is G3; sequence DTPG. GTP-binding positions include 72–76 and 133–136; these read DTPGF and NKID. The tract at residues 133 to 136 is G4; the sequence is NKID. The G5 stretch occupies residues 165-167; it reads VSA. Residues 217–293 form the KH type-2 domain; sequence LGEELPYAMN…FLKVWVKVKS (77 aa).

This sequence belongs to the TRAFAC class TrmE-Era-EngA-EngB-Septin-like GTPase superfamily. Era GTPase family. In terms of assembly, monomer.

It localises to the cytoplasm. The protein localises to the cell inner membrane. In terms of biological role, an essential GTPase that binds both GDP and GTP, with rapid nucleotide exchange. Plays a role in 16S rRNA processing and 30S ribosomal subunit biogenesis and possibly also in cell cycle regulation and energy metabolism. This chain is GTPase Era, found in Neisseria meningitidis serogroup B (strain ATCC BAA-335 / MC58).